A 156-amino-acid chain; its full sequence is MSRRRVIGQAEILREPKFGNLDVAKFMNVVMLSGKKSIAESIVYGAFEAIQNKTGKDPIEIFSQALSNVKPMVEVKSRRVGGANYQVPVEVRPQRRAALAMRWIREAAKKRGEKSMAQRLANELVEASEGRGAAMKRRDEVHRMAEAHKAFSHFRF.

The protein belongs to the universal ribosomal protein uS7 family. Part of the 30S ribosomal subunit. Contacts proteins S9 and S11.

Functionally, one of the primary rRNA binding proteins, it binds directly to 16S rRNA where it nucleates assembly of the head domain of the 30S subunit. Is located at the subunit interface close to the decoding center, probably blocks exit of the E-site tRNA. This is Small ribosomal subunit protein uS7 from Thiomonas delicata (Thiomonas cuprina).